Consider the following 630-residue polypeptide: 1-deoxy-D-xylulose-5-phosphate synthase (630 aa).

Thiamine diphosphate-binding positions include His-72 and 113-115 (GHS). Asp-144 contacts Mg(2+). Thiamine diphosphate is bound by residues 145-146 (GA), Asn-173, Tyr-284, and Glu-367. A Mg(2+)-binding site is contributed by Asn-173.

This sequence belongs to the transketolase family. DXPS subfamily. Homodimer. It depends on Mg(2+) as a cofactor. Thiamine diphosphate is required as a cofactor.

It carries out the reaction D-glyceraldehyde 3-phosphate + pyruvate + H(+) = 1-deoxy-D-xylulose 5-phosphate + CO2. It functions in the pathway metabolic intermediate biosynthesis; 1-deoxy-D-xylulose 5-phosphate biosynthesis; 1-deoxy-D-xylulose 5-phosphate from D-glyceraldehyde 3-phosphate and pyruvate: step 1/1. Its function is as follows. Catalyzes the acyloin condensation reaction between C atoms 2 and 3 of pyruvate and glyceraldehyde 3-phosphate to yield 1-deoxy-D-xylulose-5-phosphate (DXP). In Bacillus cereus (strain ATCC 10987 / NRS 248), this protein is 1-deoxy-D-xylulose-5-phosphate synthase.